Consider the following 366-residue polypeptide: GDSL esterase/lipase At1g74460 (366 aa).

Positions 1 to 20 are cleaved as a signal peptide; sequence MKFCAIFVLFIVLAINGYDC. Ser30 (nucleophile) is an active-site residue. Residues Asn113 and Asn260 are each glycosylated (N-linked (GlcNAc...) asparagine). Active-site residues include Asp320 and His323.

The protein belongs to the 'GDSL' lipolytic enzyme family.

Its subcellular location is the secreted. This Arabidopsis thaliana (Mouse-ear cress) protein is GDSL esterase/lipase At1g74460.